Reading from the N-terminus, the 254-residue chain is MQSLNYEDQVLWTRWKEWKDPKAGDDLMRRYMPLVTYHVGRISVGLPKSVHKDDLMSLGMLGLYDALEKFDPSRDLKFDTYASFRIRGAIIDGLRKEDWLPRTSREKTKKVEAAIEKLEQRYLRNVSPAEIAEELGMTVQDVVSTMNEGFFANLLSIDEKLHDQDDGENIQVMIRDDKNVPPEEKIMKDELIAQLAEKIHELSEKEQLVVSLFYKEELTLTEIGQVLNLSTSRISQIHSKALFKLKNLLEKVIQ.

Residues 54–67 (DLMSLGMLGLYDAL) carry the Polymerase core binding motif. A DNA-binding region (H-T-H motif) is located at residues 220-239 (LTEIGQVLNLSTSRISQIHS).

As to quaternary structure, monomer. Interacts transiently with the RNAP core.

Functionally, sigma factors are initiation factors that promote the attachment of RNA polymerase (RNAP) to specific initiation sites and are then released. This alternative sigma factor is required for the transcription of the flagellin and motility genes as well as for wild-type chemotaxis. Associates with the RNAP core during all growth phases with a peak at the transition to stationary phase. The sequence is that of RNA polymerase sigma-D factor (sigD) from Bacillus subtilis (strain 168).